Here is a 240-residue protein sequence, read N- to C-terminus: Diglucosylglycerate octanoyltransferase (240 aa).

The protein belongs to the OctT acyltransferase family. Homotetramer.

The enzyme catalyses (2R)-2-O-[alpha-D-glucopyranosyl-(1-&gt;6)-alpha-D-glucopyranosyl]-glycerate + octanoyl-CoA = (2R)-2-O-[6-O-octanoyl-alpha-D-glucopyranosyl-(1-&gt;6)-alpha-D-glucopyranosyl]-glycerate + CoA. Functionally, sugar octanoyltransferase likely involved in the biosynthesis of mycobacterial methylglucose lipopolysaccharide (MGLP). Catalyzes the transfer of an octanoyl group from octanoyl-CoA to the C6 OH of the second glucose in diglucosylglycerate (DGG). Can also use hexanoyl-CoA as acyl donor in vitro. DGG is the preferred acceptor, but to a lesser extent, GG (glucosylglycerate) can be used as substrate. DGG and GG are the two earliest intermediates in MGLP biosynthesis. In Mycolicibacterium hassiacum (strain DSM 44199 / CIP 105218 / JCM 12690 / 3849) (Mycobacterium hassiacum), this protein is Diglucosylglycerate octanoyltransferase.